The sequence spans 161 residues: Regulator of ribonuclease activity A (161 aa).

The protein belongs to the RraA family. As to quaternary structure, homotrimer. Binds to both RNA-binding sites in the C-terminal region of Rne and to RhlB.

It is found in the cytoplasm. Globally modulates RNA abundance by binding to RNase E (Rne) and regulating its endonucleolytic activity. Can modulate Rne action in a substrate-dependent manner by altering the composition of the degradosome. Modulates RNA-binding and helicase activities of the degradosome. This Yersinia enterocolitica serotype O:8 / biotype 1B (strain NCTC 13174 / 8081) protein is Regulator of ribonuclease activity A.